Here is a 442-residue protein sequence, read N- to C-terminus: Radical S-adenosyl methionine domain-containing protein 1, mitochondrial (442 aa).

Residues 1-17 constitute a mitochondrion transit peptide; the sequence is MVPSGVRTGRWVAAARA. One can recognise a Radical SAM core domain in the interval 34–270; it reads ESASTRAALY…RTVLRDAGFR (237 aa). Tyrosine 43 is an S-adenosyl-L-methionine binding site. Positions 49, 53, and 56 each coordinate [4Fe-4S] cluster. S-adenosyl-L-methionine contacts are provided by residues glycine 98, 99–100, glutamate 131, glutamine 158, arginine 170, and aspartate 195; that span reads GT.

The protein belongs to the anaerobic coproporphyrinogen-III oxidase family. HemW subfamily. It depends on [4Fe-4S] cluster as a cofactor.

It is found in the mitochondrion. Functionally, may be a heme chaperone, appears to bind heme. Homologous bacterial proteins do not have oxygen-independent coproporphyrinogen-III oxidase activity. Binds 1 [4Fe-4S] cluster. The cluster is coordinated with 3 cysteines and an exchangeable S-adenosyl-L-methionine. In Mus musculus (Mouse), this protein is Radical S-adenosyl methionine domain-containing protein 1, mitochondrial (Rsad1).